The chain runs to 628 residues: Chaperone protein HtpG (628 aa).

The tract at residues M1–R340 is a; substrate-binding. Residues E341–R557 form a b region. Positions L558–A628 are c.

Belongs to the heat shock protein 90 family. As to quaternary structure, homodimer.

It is found in the cytoplasm. Molecular chaperone. Has ATPase activity. The chain is Chaperone protein HtpG from Methylobacillus flagellatus (strain ATCC 51484 / DSM 6875 / VKM B-1610 / KT).